A 572-amino-acid chain; its full sequence is Arginine--tRNA ligase (572 aa).

The short motif at 121 to 131 (PNLAKEMHVGH) is the 'HIGH' region element.

Belongs to the class-I aminoacyl-tRNA synthetase family. In terms of assembly, monomer.

Its subcellular location is the cytoplasm. It catalyses the reaction tRNA(Arg) + L-arginine + ATP = L-arginyl-tRNA(Arg) + AMP + diphosphate. The chain is Arginine--tRNA ligase from Chromobacterium violaceum (strain ATCC 12472 / DSM 30191 / JCM 1249 / CCUG 213 / NBRC 12614 / NCIMB 9131 / NCTC 9757 / MK).